A 51-amino-acid chain; its full sequence is Lantibiotic streptococcin A-FF22 (51 aa).

Positions methionine 1 to alanine 25 are excised as a propeptide. 2 consecutive cross-links (beta-methyllanthionine (Thr-Cys)) follow at residues threonine 33 to cysteine 38 and threonine 42 to cysteine 50. Positions serine 35–cysteine 49 form a cross-link, lanthionine (Ser-Cys). Position 48 is a 2,3-didehydrobutyrine (threonine 48).

The protein belongs to the type A lantibiotic family. In terms of processing, maturation of lantibiotics involves the enzymatic conversion of Thr, and Ser into dehydrated AA and the formation of thioether bonds with cysteine. This is followed by membrane translocation and cleavage of the modified precursor.

The protein resides in the secreted. The protein localises to the cell surface. Functionally, lanthionine-containing peptide antibiotic (lantibiotic) active on certain Gram-positive bacteria. The bactericidal activity of lantibiotics is based on depolarization of energized bacterial cytoplasmic membranes, initiated by the formation of aqueous transmembrane pores. The polypeptide is Lantibiotic streptococcin A-FF22 (scnA) (Streptococcus pyogenes).